The primary structure comprises 1562 residues: Neuralized-like protein 4 (1562 aa).

The span at 1 to 42 (MAAGSGGSGGSGGGPGPGPGGGGGPSGSGSGPGSNGGLGSGG) shows a compositional bias: gly residues. Disordered regions lie at residues 1–48 (MAAG…HPRT) and 207–236 (PEPGFSPPTPIPTPPLEPLAPTEDSALAEQ). 2 consecutive NHR domains span residues 41–207 (GGEL…VLPP) and 317–484 (ALLF…IVHN). Residues 207–224 (PEPGFSPPTPIPTPPLEP) are compositionally biased toward pro residues. Ser-502 bears the Phosphoserine mark. NHR domains follow at residues 520 to 686 (RLLF…IVDD) and 716 to 884 (DLRF…ITNA). The tract at residues 691–716 (PVPEPLPEGNNQVSPSSPSSGAGGSD) is disordered. Ser-907 is subject to Phosphoserine. The NHR 5 domain occupies 913 to 1086 (AHRFHSTCGK…PVRGVSIVSS (174 aa)). Residues 1086 to 1123 (STRLEESEGTQPPSPSSDTGSEGEEDDEGEEHGLGGQN) are disordered. The segment covering 1106 to 1115 (SEGEEDDEGE) has biased composition (acidic residues). The 164-residue stretch at 1131–1294 (TLEFLENHGK…QCEQVTIVNP (164 aa)) folds into the NHR 6 domain.

Interacts with CCP110; this interaction propmotes CCP110 ubiquitination and degradation via the proteasome pathway. Via its interaction with CCP110, may indirectly interact with CEP97. Interacts with the E3 ubiquitin-protein ligase HERC2 and UBE3A. May interact with MAPK6 and hence mediate MAPK6 interaction with UBE3A. Interaction with UBE3A may be indirect and mediated by HERC2. In terms of processing, ubiquitinated; undergoes HERC2-dependent 'Lys-48' ubiquitination. This ubiquitination leads to proteasomal degradation. Widely expressed at high levels (including brain).

It localises to the cytoplasm. It is found in the cytoskeleton. The protein resides in the microtubule organizing center. Its subcellular location is the centrosome. The protein localises to the centriole. Promotes CCP110 ubiquitination and proteasome-dependent degradation. By counteracting accumulation of CP110, maintains normal centriolar homeostasis and preventing formation of ectopic microtubular organizing centers. The protein is Neuralized-like protein 4 (NEURL4) of Homo sapiens (Human).